Consider the following 361-residue polypeptide: Chorismate synthase (361 aa).

2 residues coordinate NADP(+): Arg-48 and Arg-54. FMN-binding positions include 125 to 127 (RSS), 238 to 239 (NA), Gly-278, 293 to 297 (KPTSS), and Arg-319.

The protein belongs to the chorismate synthase family. In terms of assembly, homotetramer. FMNH2 serves as cofactor.

It carries out the reaction 5-O-(1-carboxyvinyl)-3-phosphoshikimate = chorismate + phosphate. Its pathway is metabolic intermediate biosynthesis; chorismate biosynthesis; chorismate from D-erythrose 4-phosphate and phosphoenolpyruvate: step 7/7. Functionally, catalyzes the anti-1,4-elimination of the C-3 phosphate and the C-6 proR hydrogen from 5-enolpyruvylshikimate-3-phosphate (EPSP) to yield chorismate, which is the branch point compound that serves as the starting substrate for the three terminal pathways of aromatic amino acid biosynthesis. This reaction introduces a second double bond into the aromatic ring system. The sequence is that of Chorismate synthase from Salmonella paratyphi A (strain ATCC 9150 / SARB42).